Here is a 46-residue protein sequence, read N- to C-terminus: Probable butyrate kinase (46 aa).

It belongs to the acetokinase family.

It localises to the cytoplasm. The enzyme catalyses butanoate + ATP = butanoyl phosphate + ADP. In Geobacillus stearothermophilus (Bacillus stearothermophilus), this protein is Probable butyrate kinase (buk).